The following is a 356-amino-acid chain: D-alanine--D-alanine ligase (356 aa).

In terms of domain architecture, ATP-grasp spans 134–339; sequence KQLFAHRGLP…YSDLIKKLIE (206 aa). 167–222 is an ATP binding site; sequence HDKLEYPVFVKPANLGSSVGISKCNNEEELKNGIEEAFQFDRKLVIEQGIEAREIE. Residues Asp-293, Glu-306, and Asn-308 each contribute to the Mg(2+) site.

Belongs to the D-alanine--D-alanine ligase family. Mg(2+) serves as cofactor. The cofactor is Mn(2+).

The protein resides in the cytoplasm. It catalyses the reaction 2 D-alanine + ATP = D-alanyl-D-alanine + ADP + phosphate + H(+). It functions in the pathway cell wall biogenesis; peptidoglycan biosynthesis. In terms of biological role, cell wall formation. This is D-alanine--D-alanine ligase from Staphylococcus saprophyticus subsp. saprophyticus (strain ATCC 15305 / DSM 20229 / NCIMB 8711 / NCTC 7292 / S-41).